The following is a 312-amino-acid chain: Olfactory receptor 2M3 (312 aa).

Over 1–25 (MARENSTFNSDFILLGIFNHSPTHT) the chain is Extracellular. An N-linked (GlcNAc...) asparagine glycan is attached at Asn5. Residues 26-49 (FLFFLVLAIFSVAFMGNSVMVLLI) traverse the membrane as a helical segment. The Cytoplasmic segment spans residues 50 to 57 (YLDTQLHT). A helical membrane pass occupies residues 58-79 (PMYLLLSQLSLMDLMLICTTVP). Topologically, residues 80–100 (KMAFNYLSGSKSISMAGCATQ) are extracellular. Residues Cys97 and Cys189 are joined by a disulfide bond. A helical transmembrane segment spans residues 101–120 (IFFYTSLLGSECFLLAVMAY). The Cytoplasmic segment spans residues 121 to 139 (DRYTAICHPLRYTNLMSPK). The helical transmembrane segment at 140 to 158 (ICGLMTAFSWILGSTDGII) threads the bilayer. At 159–195 (DVVATFSFSYCGSREIAHFFCDFPSLLILSCSDTSIF) the chain is on the extracellular side. The helical transmembrane segment at 196–219 (EKILFICCIVMIVFPVAIIIASYA) threads the bilayer. Topologically, residues 220–236 (RVILAVIHMGSGEGRRK) are cytoplasmic. A helical membrane pass occupies residues 237 to 259 (AFTTCSSHLLVVGMYYGAALFMY). At 260–272 (IRPTSDRSPTQDK) the chain is on the extracellular side. Residues 273 to 292 (MVSVFYTILTPMLNPLIYSL) form a helical membrane-spanning segment. Topologically, residues 293–312 (RNKEVTRAFMKILGKGKSGE) are cytoplasmic.

This sequence belongs to the G-protein coupled receptor 1 family.

The protein resides in the cell membrane. In terms of biological role, odorant receptor. The chain is Olfactory receptor 2M3 (OR2M3) from Homo sapiens (Human).